Reading from the N-terminus, the 331-residue chain is Sulfate/thiosulfate import ATP-binding protein CysA (331 aa).

The ABC transporter domain maps to 2 to 232; that stretch reads ITVTNARKNY…PANEFVMSFL (231 aa). Residue 34–41 coordinates ATP; the sequence is GPSGSGKS.

Belongs to the ABC transporter superfamily. Sulfate/tungstate importer (TC 3.A.1.6) family. In terms of assembly, the complex is composed of two ATP-binding proteins (CysA), two transmembrane proteins (CysT and CysW) and a solute-binding protein (CysP).

The protein resides in the cell membrane. It catalyses the reaction sulfate(out) + ATP + H2O = sulfate(in) + ADP + phosphate + H(+). The catalysed reaction is thiosulfate(out) + ATP + H2O = thiosulfate(in) + ADP + phosphate + H(+). Its function is as follows. Part of the ABC transporter complex CysAWTP involved in sulfate/thiosulfate import. Responsible for energy coupling to the transport system. The chain is Sulfate/thiosulfate import ATP-binding protein CysA from Nocardia farcinica (strain IFM 10152).